The primary structure comprises 92 residues: Small ribosomal subunit protein uS19 (92 aa).

It belongs to the universal ribosomal protein uS19 family.

In terms of biological role, protein S19 forms a complex with S13 that binds strongly to the 16S ribosomal RNA. This Listeria innocua serovar 6a (strain ATCC BAA-680 / CLIP 11262) protein is Small ribosomal subunit protein uS19.